The following is a 1793-amino-acid chain: Transposon Ty1-H Gag-Pol polyprotein (1793 aa).

3 stretches are compositionally biased toward polar residues: residues 1 to 10 (MESQQLSNYP), 48 to 60 (TKAN…TPAS), and 127 to 152 (QSQF…GNTF). Disordered regions lie at residues 1–84 (MESQ…QNGP), 126–174 (PQSQ…PPPM), and 390–459 (GSRN…SKST). Positions 153-165 (TDSSSADSDMTST) are enriched in low complexity. Residues 337–439 (NNGIHINNKV…NSKSKTARAH (103 aa)) are RNA-binding. Low complexity predominate over residues 440–456 (NVSTSNNSPSTDNDSIS). Asp499 serves as the catalytic For protease activity; shared with dimeric partner. Positions 621–678 (NVHTSESTRKYPYPFIHRMLAHANAQTIRYSLKNNTITYFNESDVDWSSAIDYQCPDC) are integrase-type zinc finger-like. Positions 698 to 873 (NSYEPFQYLH…AGLDISTLLP (176 aa)) constitute an Integrase catalytic domain. Mg(2+)-binding residues include Asp709 and Asp774. A disordered region spans residues 996-1208 (AVSPTDSTPP…SSLGGIGDSN (213 aa)). A compositionally biased stretch (low complexity) spans 998–1007 (SPTDSTPPST). The span at 1043-1053 (STPQISDIEST) shows a compositional bias: polar residues. Basic and acidic residues predominate over residues 1076–1091 (ESSHASKSKDFRHSDS). Polar residues-rich tracts occupy residues 1092 to 1120 (YSDN…QTSE) and 1133 to 1144 (SIDTSSSESNSL). The Bipartite nuclear localization signal motif lies at 1216-1250 (KKRSLEDNETEIKVSRDTWNTKNMRSLEPPRSKKR). A Reverse transcriptase Ty1/copia-type domain is found at 1376 to 1514 (NNYYITQLDI…DILGLEIKYQ (139 aa)). Asp1384, Asp1465, Asp1466, Asp1648, Glu1690, and Asp1723 together coordinate Mg(2+). The 143-residue stretch at 1648–1790 (DASYGNQPYY…IKTFKLLTNK (143 aa)) folds into the RNase H Ty1/copia-type domain.

In terms of assembly, the capsid protein forms a homotrimer, from which the VLPs are assembled. The protease is a homodimer, whose active site consists of two apposed aspartic acid residues. In terms of processing, initially, virus-like particles (VLPs) are composed of the structural unprocessed proteins Gag and Gag-Pol, and also contain the host initiator methionine tRNA (tRNA(i)-Met) which serves as a primer for minus-strand DNA synthesis, and a dimer of genomic Ty RNA. Processing of the polyproteins occurs within the particle and proceeds by an ordered pathway, called maturation. First, the protease (PR) is released by autocatalytic cleavage of the Gag-Pol polyprotein yielding capsid protein p45 and a Pol-p154 precursor protein. This cleavage is a prerequisite for subsequent processing of Pol-p154 at the remaining sites to release the mature structural and catalytic proteins. Maturation takes place prior to the RT reaction and is required to produce transposition-competent VLPs.

It localises to the cytoplasm. The protein localises to the nucleus. It catalyses the reaction DNA(n) + a 2'-deoxyribonucleoside 5'-triphosphate = DNA(n+1) + diphosphate. It carries out the reaction Endonucleolytic cleavage to 5'-phosphomonoester.. Its function is as follows. Capsid protein (CA) is the structural component of the virus-like particle (VLP), forming the shell that encapsulates the retrotransposons dimeric RNA genome. The particles are assembled from trimer-clustered units and there are holes in the capsid shells that allow for the diffusion of macromolecules. CA also has nucleocapsid-like chaperone activity, promoting primer tRNA(i)-Met annealing to the multipartite primer-binding site (PBS), dimerization of Ty1 RNA and initiation of reverse transcription. The aspartyl protease (PR) mediates the proteolytic cleavages of the Gag and Gag-Pol polyproteins after assembly of the VLP. In terms of biological role, reverse transcriptase/ribonuclease H (RT) is a multifunctional enzyme that catalyzes the conversion of the retro-elements RNA genome into dsDNA within the VLP. The enzyme displays a DNA polymerase activity that can copy either DNA or RNA templates, and a ribonuclease H (RNase H) activity that cleaves the RNA strand of RNA-DNA heteroduplexes during plus-strand synthesis and hydrolyzes RNA primers. The conversion leads to a linear dsDNA copy of the retrotransposon that includes long terminal repeats (LTRs) at both ends. Functionally, integrase (IN) targets the VLP to the nucleus, where a subparticle preintegration complex (PIC) containing at least integrase and the newly synthesized dsDNA copy of the retrotransposon must transit the nuclear membrane. Once in the nucleus, integrase performs the integration of the dsDNA into the host genome. The chain is Transposon Ty1-H Gag-Pol polyprotein (TY1B-H) from Saccharomyces cerevisiae (strain ATCC 204508 / S288c) (Baker's yeast).